Here is a 34-residue protein sequence, read N- to C-terminus: uncharacterized protein (34 aa).

Residues 10–30 (LIITSSFFAIAVVLVLSVLLI) form a helical membrane-spanning segment.

The protein localises to the membrane. This is an uncharacterized protein from Shigella flexneri.